Here is a 126-residue protein sequence, read N- to C-terminus: Fatty acid-binding protein, liver (126 aa).

At Ala2 the chain carries N-acetylalanine. Residues Arg56, Gln57, Lys77, His99, and Gln101 each contribute to the cholate site.

Belongs to the calycin superfamily. Fatty-acid binding protein (FABP) family.

The protein resides in the cytoplasm. Binds free fatty acids and their coenzyme A derivatives, bilirubin, and some other small molecules in the cytoplasm. May be involved in intracellular lipid transport. Binds 2 molecules of cholate per subunit. This is Fatty acid-binding protein, liver (FABP1) from Gallus gallus (Chicken).